We begin with the raw amino-acid sequence, 362 residues long: Acetylajmalan esterase 2 (362 aa).

The first 23 residues, 1–23, serve as a signal peptide directing secretion; sequence MGFAARPFHIVFSLFVLAGATQA. Residue Ser-38 is the Nucleophile of the active site. N-linked (GlcNAc...) asparagine glycans are attached at residues Asn-100, Asn-118, Asn-151, and Asn-202. Active-site residues include Asp-335 and His-338.

It belongs to the 'GDSL' lipolytic enzyme family. Confined to roots.

The catalysed reaction is 17-O-acetylnorajmaline + H2O = norajmaline + acetate + H(+). It catalyses the reaction 17-O-acetylajmaline + H2O = ajmaline + acetate + H(+). It functions in the pathway alkaloid biosynthesis; ajmaline biosynthesis. Functionally, acetylesterase involved in the biosynthesis of ajmaline-type monoterpenoid indole alkaloids (MIAs) natural products, important plant-derived pharmaceuticals used in the therapy of heart disorders. Deacetylates 17-O-acetylnorajmaline to produce norajmaline. May also catalyze the conversion of 17-O-acetylajmaline to ajmaline. In Rauvolfia serpentina (Serpentine wood), this protein is Acetylajmalan esterase 2.